Reading from the N-terminus, the 104-residue chain is Large ribosomal subunit protein uL24 (104 aa).

It belongs to the universal ribosomal protein uL24 family. As to quaternary structure, part of the 50S ribosomal subunit.

One of two assembly initiator proteins, it binds directly to the 5'-end of the 23S rRNA, where it nucleates assembly of the 50S subunit. In terms of biological role, one of the proteins that surrounds the polypeptide exit tunnel on the outside of the subunit. This is Large ribosomal subunit protein uL24 from Yersinia pseudotuberculosis serotype O:1b (strain IP 31758).